The following is a 484-amino-acid chain: ATP-dependent rRNA helicase RRP3 (484 aa).

Low complexity-rich tracts occupy residues 1 to 14 and 22 to 34; these read MPSPSPEASSSMSQ and PSPASSNPDAPEA. The segment at 1–38 is disordered; that stretch reads MPSPSPEASSSMSQPGPPSRSPSPASSNPDAPEASHNK. The Q motif motif lies at 38 to 66; it reads KTFADLGISPELCRACASMGFKKPSDIQA. Residues 69 to 240 enclose the Helicase ATP-binding domain; the sequence is IPHALEGKDI…RASLNKPVRV (172 aa). 82–89 contacts ATP; that stretch reads AQTGSGKT. The short motif at 188–191 is the DEAD box element; that stretch reads DEAD. The 149-residue stretch at 263-411 folds into the Helicase C-terminal domain; sequence NKDAYLLYLA…SFDVDKEAVA (149 aa). A disordered region spans residues 425–484; that stretch reads ALEMRESGTGGGGGKRGRDKGKRKTFGDGDDRDRDDDVVEAGVPRKKNKFTPGGKKKARK. Basic residues-rich tracts occupy residues 439–448 and 468–484; these read KRGRDKGKRK and PRKKNKFTPGGKKKARK.

Belongs to the DEAD box helicase family. DDX47/RRP3 subfamily. As to quaternary structure, interacts with the SSU processome.

It is found in the nucleus. The enzyme catalyses ATP + H2O = ADP + phosphate + H(+). Its function is as follows. ATP-dependent rRNA helicase required for pre-ribosomal RNA processing. Involved in the maturation of the 35S-pre-rRNA and to its cleavage to mature 18S rRNA. This chain is ATP-dependent rRNA helicase RRP3, found in Cryptococcus neoformans var. neoformans serotype D (strain B-3501A) (Filobasidiella neoformans).